Reading from the N-terminus, the 192-residue chain is E3 ubiquitin-protein ligase RNF185 (192 aa).

The segment covering 1–14 (MASKGPSASASTEN) has biased composition (polar residues). The interval 1-30 (MASKGPSASASTENSSAGGPSGSSNGTGES) is disordered. The Cytoplasmic segment spans residues 1 to 130 (MASKGPSASA…GGFQGFGFGD (130 aa)). Positions 15 to 27 (SSAGGPSGSSNGT) are enriched in low complexity. Positions 29–80 (ESGGQDSTFECNICLDTAKDAVISLCGHLFCWPCLHQWLETRPNRQVCPVCK) are required for ubiquitin ligase activity and protection against ER stress-induced cell death. An RING-type zinc finger spans residues 39–80 (CNICLDTAKDAVISLCGHLFCWPCLHQWLETRPNRQVCPVCK). The interval 90–123 (PLYGRGSTGQQDPREKTPPRPQGQRPEPENRGGF) is disordered. The chain crosses the membrane as a helical span at residues 131–151 (GGFQMSFGIGAFPFGIFATAF). Residues 152-171 (NINDGRPPPAVPGTPQYVDE) lie on the Mitochondrial intermembrane side of the membrane. A helical membrane pass occupies residues 172 to 192 (QFLSRLFLFVALVIMFWLLIA).

In terms of assembly, interacts with ATG5 and BNIP1.

It localises to the mitochondrion outer membrane. The protein localises to the endoplasmic reticulum membrane. It carries out the reaction S-ubiquitinyl-[E2 ubiquitin-conjugating enzyme]-L-cysteine + [acceptor protein]-L-lysine = [E2 ubiquitin-conjugating enzyme]-L-cysteine + N(6)-ubiquitinyl-[acceptor protein]-L-lysine.. It participates in protein modification; protein ubiquitination. Its function is as follows. E3 ubiquitin-protein ligase that regulates selective mitochondrial autophagy by mediating 'Lys-63'-linked polyubiquitination of BNIP1. Acts in the endoplasmic reticulum (ER)-associated degradation (ERAD) pathway, which targets misfolded proteins that accumulate in the endoplasmic reticulum (ER) for ubiquitination and subsequent proteasome-mediated degradation. Protects cells from ER stress-induced apoptosis. Responsible for the cotranslational ubiquitination and degradation of CFTR in the ERAD pathway. Also acts as a regulator of the innate antiviral response by catalyzing 'Lys-27'-linked polyubiquitination of CGAS, thereby promoting CGAS cyclic GMP-AMP synthase activity. Preferentially associates with the E2 enzymes UBE2J1 and UBE2J2. The sequence is that of E3 ubiquitin-protein ligase RNF185 (Rnf185) from Rattus norvegicus (Rat).